A 264-amino-acid polypeptide reads, in one-letter code: Undecaprenyl-diphosphatase (264 aa).

8 helical membrane passes run 15 to 37, 42 to 62, 84 to 104, 108 to 128, 143 to 163, 182 to 202, 217 to 237, and 243 to 263; these read GLTE…LLGF, AASF…VLYW, YLLF…HDFI, LFNP…ILIV, VTPK…WPGF, IAAE…TGYD, FLAV…KGFI, and LTLR…LFFW.

Belongs to the UppP family.

The protein localises to the cell inner membrane. The enzyme catalyses di-trans,octa-cis-undecaprenyl diphosphate + H2O = di-trans,octa-cis-undecaprenyl phosphate + phosphate + H(+). Functionally, catalyzes the dephosphorylation of undecaprenyl diphosphate (UPP). Confers resistance to bacitracin. The polypeptide is Undecaprenyl-diphosphatase (Maridesulfovibrio salexigens (strain ATCC 14822 / DSM 2638 / NCIMB 8403 / VKM B-1763) (Desulfovibrio salexigens)).